A 274-amino-acid chain; its full sequence is Cytochrome b-c1 complex subunit Rieske, mitochondrial (274 aa).

The Mitochondrial matrix segment spans residues Ser79 to Ser103. The chain crosses the membrane as a helical span at residues Arg104–Met140. The Mitochondrial intermembrane segment spans residues Ser141–Gly274. The Rieske domain occupies Glu187 to Ile272. 5 residues coordinate [2Fe-2S] cluster: Cys217, His219, Cys236, His239, and Ser241. An intrachain disulfide couples Cys222 to Cys238.

Belongs to the Rieske iron-sulfur protein family. In terms of assembly, component of the ubiquinol-cytochrome c oxidoreductase (cytochrome b-c1 complex, complex III, CIII), a multisubunit enzyme composed of 11 subunits. The complex is composed of 3 respiratory subunits cytochrome b, cytochrome c1 and Rieske protein UQCRFS1, 2 core protein subunits UQCRC1/QCR1 and UQCRC2/QCR2, and 6 low-molecular weight protein subunits UQCRH/QCR6, UQCRB/QCR7, UQCRQ/QCR8, UQCR10/QCR9, UQCR11/QCR10 and subunit 9, the cleavage product of Rieske protein UQCRFS1. The complex exists as an obligatory dimer and forms supercomplexes (SCs) in the inner mitochondrial membrane with NADH-ubiquinone oxidoreductase (complex I, CI) and cytochrome c oxidase (complex IV, CIV), resulting in different assemblies (supercomplex SCI(1)III(2)IV(1) and megacomplex MCI(2)III(2)IV(2)). Incorporation of the Rieske protein UQCRFS1 is the penultimate step in complex III assembly. Interacts with TTC19, which is involved in the clearance of UQCRFS1 fragments. Component of the ubiquinol-cytochrome c oxidoreductase (cytochrome b-c1 complex, complex III, CIII). Subunit 9 corresponds to the mitochondrial targeting sequence (MTS) of Rieske protein UQCRFS1. It is retained after processing and incorporated inside complex III, where it remains bound to the complex and localizes between the 2 core subunits UQCRC1/QCR1 and UQCRC2/QCR2. Requires [2Fe-2S] cluster as cofactor. Proteolytic processing is necessary for the correct insertion of UQCRFS1 in the complex III dimer. Several fragments are generated during UQCRFS1 insertion, most probably due to the endogenous matrix-processing peptidase (MPP) activity of the 2 core protein subunits UQCRC1/QCR1 and UQCRC2/QCR2, which are homologous to the 2 mitochondrial-processing peptidase (MPP) subunits beta-MPP and alpha-MPP respectively. The action of the protease is also necessary for the clearance of the UQCRFS1 fragments.

It localises to the mitochondrion inner membrane. The enzyme catalyses a quinol + 2 Fe(III)-[cytochrome c](out) = a quinone + 2 Fe(II)-[cytochrome c](out) + 2 H(+)(out). In terms of biological role, component of the ubiquinol-cytochrome c oxidoreductase, a multisubunit transmembrane complex that is part of the mitochondrial electron transport chain which drives oxidative phosphorylation. The respiratory chain contains 3 multisubunit complexes succinate dehydrogenase (complex II, CII), ubiquinol-cytochrome c oxidoreductase (cytochrome b-c1 complex, complex III, CIII) and cytochrome c oxidase (complex IV, CIV), that cooperate to transfer electrons derived from NADH and succinate to molecular oxygen, creating an electrochemical gradient over the inner membrane that drives transmembrane transport and the ATP synthase. The cytochrome b-c1 complex catalyzes electron transfer from ubiquinol to cytochrome c, linking this redox reaction to translocation of protons across the mitochondrial inner membrane, with protons being carried across the membrane as hydrogens on the quinol. In the process called Q cycle, 2 protons are consumed from the matrix, 4 protons are released into the intermembrane space and 2 electrons are passed to cytochrome c. The Rieske protein is a catalytic core subunit containing a [2Fe-2S] iron-sulfur cluster. It cycles between 2 conformational states during catalysis to transfer electrons from the quinol bound in the Q(0) site in cytochrome b to cytochrome c1. Incorporation of UQCRFS1 is the penultimate step in complex III assembly. Its function is as follows. Component of the ubiquinol-cytochrome c oxidoreductase (cytochrome b-c1 complex, complex III, CIII). UQCRFS1 undergoes proteolytic processing once it is incorporated in the complex III dimer. One of the fragments, called subunit 9, corresponds to its mitochondrial targeting sequence (MTS). The proteolytic processing is necessary for the correct insertion of UQCRFS1 in the complex III dimer, but the persistence of UQCRFS1-derived fragments may prevent newly imported UQCRFS1 to be processed and assembled into complex III and is detrimental for the complex III structure and function. In Pan paniscus (Pygmy chimpanzee), this protein is Cytochrome b-c1 complex subunit Rieske, mitochondrial (UQCRFS1).